We begin with the raw amino-acid sequence, 190 residues long: Threonylcarbamoyl-AMP synthase (190 aa).

One can recognise a YrdC-like domain in the interval 7–190 (SQDVASLVIA…ALSGELIRQG (184 aa)).

Belongs to the SUA5 family. TsaC subfamily.

The protein resides in the cytoplasm. The enzyme catalyses L-threonine + hydrogencarbonate + ATP = L-threonylcarbamoyladenylate + diphosphate + H2O. Required for the formation of a threonylcarbamoyl group on adenosine at position 37 (t(6)A37) in tRNAs that read codons beginning with adenine. Catalyzes the conversion of L-threonine, HCO(3)(-)/CO(2) and ATP to give threonylcarbamoyl-AMP (TC-AMP) as the acyladenylate intermediate, with the release of diphosphate. The protein is Threonylcarbamoyl-AMP synthase of Sodalis glossinidius (strain morsitans).